The chain runs to 265 residues: Tryptophan synthase alpha chain (265 aa).

Catalysis depends on proton acceptor residues E49 and E60.

This sequence belongs to the TrpA family. As to quaternary structure, tetramer of two alpha and two beta chains.

The catalysed reaction is (1S,2R)-1-C-(indol-3-yl)glycerol 3-phosphate + L-serine = D-glyceraldehyde 3-phosphate + L-tryptophan + H2O. Its pathway is amino-acid biosynthesis; L-tryptophan biosynthesis; L-tryptophan from chorismate: step 5/5. Functionally, the alpha subunit is responsible for the aldol cleavage of indoleglycerol phosphate to indole and glyceraldehyde 3-phosphate. The sequence is that of Tryptophan synthase alpha chain from Janthinobacterium sp. (strain Marseille) (Minibacterium massiliensis).